The chain runs to 360 residues: Phosphoserine aminotransferase (360 aa).

Residue arginine 42 participates in L-glutamate binding. Positions 102, 152, 171, and 194 each coordinate pyridoxal 5'-phosphate. The residue at position 195 (lysine 195) is an N6-(pyridoxal phosphate)lysine. Pyridoxal 5'-phosphate is bound at residue 237-238; it reads NT.

Belongs to the class-V pyridoxal-phosphate-dependent aminotransferase family. SerC subfamily. As to quaternary structure, homodimer. It depends on pyridoxal 5'-phosphate as a cofactor.

It localises to the cytoplasm. The enzyme catalyses O-phospho-L-serine + 2-oxoglutarate = 3-phosphooxypyruvate + L-glutamate. It catalyses the reaction 4-(phosphooxy)-L-threonine + 2-oxoglutarate = (R)-3-hydroxy-2-oxo-4-phosphooxybutanoate + L-glutamate. The protein operates within amino-acid biosynthesis; L-serine biosynthesis; L-serine from 3-phospho-D-glycerate: step 2/3. It functions in the pathway cofactor biosynthesis; pyridoxine 5'-phosphate biosynthesis; pyridoxine 5'-phosphate from D-erythrose 4-phosphate: step 3/5. In terms of biological role, catalyzes the reversible conversion of 3-phosphohydroxypyruvate to phosphoserine and of 3-hydroxy-2-oxo-4-phosphonooxybutanoate to phosphohydroxythreonine. The polypeptide is Phosphoserine aminotransferase (Coxiella burnetii (strain CbuG_Q212) (Coxiella burnetii (strain Q212))).